A 378-amino-acid polypeptide reads, in one-letter code: Zinc transporter 7 (378 aa).

The Cytoplasmic portion of the chain corresponds to 1–37; sequence MLPLSIKDDEYKPPRLNLFRKMSGWFRSILADKTSRN. Residues 38-58 traverse the membrane as a helical segment; it reads LFFFLCLNLSFAFVELLYGVW. Topologically, residues 59–67 are lumenal; it reads SNSLGLISD. Residues 68-88 traverse the membrane as a helical segment; it reads SFHMFFDCTALLAGLAASVIS. Residues 89-102 lie on the Cytoplasmic side of the membrane; the sequence is KWRSNDAFSYGYVR. The helical transmembrane segment at 103–123 threads the bilayer; the sequence is AEVLAGFVNGLFLIFTAFFIF. At 124-140 the chain is on the lumenal side; that stretch reads SEGVERALEPPDVHHER. Residues 141-161 traverse the membrane as a helical segment; sequence LLPVSILGFIVNLIGIFVFQH. Positions 161–223 are his-rich loop; the sequence is HGGHGHSHGS…HGQDYCHDDH (63 aa). At 162–238 the chain is on the cytoplasmic side; that stretch reads GGHGHSHGSG…TGSSKQILQG (77 aa). A disordered region spans residues 185–214; sequence HGHSHRGHGHSHEHKHGHTHDHGHSHGLSH. Positions 186 to 211 are enriched in basic residues; the sequence is GHSHRGHGHSHEHKHGHTHDHGHSHG. A helical transmembrane segment spans residues 239-259; sequence VFLHIVADTLGSIGVIISAIL. Topologically, residues 260–264 are lumenal; it reads MQNYG. A helical membrane pass occupies residues 265 to 285; sequence LMIADPICSMLIALLIGVSIV. Residues 286–378 are Cytoplasmic-facing; sequence PLLKESIGIL…LYIQIDVAAM (93 aa).

The protein belongs to the cation diffusion facilitator (CDF) transporter (TC 2.A.4) family. SLC30A subfamily. As to quaternary structure, homooligomer.

Its subcellular location is the golgi apparatus membrane. The protein localises to the cytoplasmic vesicle. It is found in the golgi apparatus. The protein resides in the trans-Golgi network. It localises to the sarcoplasmic reticulum. Its subcellular location is the mitochondrion. The catalysed reaction is Zn(2+)(in) = Zn(2+)(out). Its function is as follows. Zinc ion transporter mediating zinc entry from the cytosol into the lumen of organelles along the secretory pathway. By contributing to zinc ion homeostasis within the early secretory pathway, regulates the activation and folding of enzymes like alkaline phosphatases. This Gallus gallus (Chicken) protein is Zinc transporter 7 (SLC30A7).